We begin with the raw amino-acid sequence, 194 residues long: Peptidyl-tRNA hydrolase (194 aa).

Tyrosine 16 provides a ligand contact to tRNA. Histidine 21 serves as the catalytic Proton acceptor. Residues phenylalanine 67, asparagine 69, and asparagine 115 each coordinate tRNA.

It belongs to the PTH family. Monomer.

It is found in the cytoplasm. It carries out the reaction an N-acyl-L-alpha-aminoacyl-tRNA + H2O = an N-acyl-L-amino acid + a tRNA + H(+). Functionally, hydrolyzes ribosome-free peptidyl-tRNAs (with 1 or more amino acids incorporated), which drop off the ribosome during protein synthesis, or as a result of ribosome stalling. Catalyzes the release of premature peptidyl moieties from peptidyl-tRNA molecules trapped in stalled 50S ribosomal subunits, and thus maintains levels of free tRNAs and 50S ribosomes. The chain is Peptidyl-tRNA hydrolase from Sodalis glossinidius (strain morsitans).